The following is a 324-amino-acid chain: Carbonic anhydrase, chloroplastic (324 aa).

It belongs to the beta-class carbonic anhydrase family. As to quaternary structure, homohexamer.

It localises to the plastid. It is found in the chloroplast stroma. It catalyses the reaction hydrogencarbonate + H(+) = CO2 + H2O. In terms of biological role, reversible hydration of carbon dioxide. This is Carbonic anhydrase, chloroplastic from Hordeum vulgare (Barley).